The primary structure comprises 1594 residues: Transcription factor Gibbin (1594 aa).

4 disordered regions span residues 19-111, 149-241, 256-307, and 367-464; these read PDYL…RHWD, LRLS…LADA, QLLE…DPLG, and CSPH…RKGK. Over residues 30–47 the composition is skewed to pro residues; sequence GGPPTPRPLLPTRPPASP. Lys-79 bears the N6-acetyllysine mark. Over residues 165 to 177 the composition is skewed to polar residues; that stretch reads SFFSSPSLANSIR. Over residues 178 to 193 the composition is skewed to basic and acidic residues; it reads SPEERANPHTKSERPS. Residues 228 to 240 are compositionally biased toward acidic residues; it reads PEPDGPDYSELAD. Ser-267 carries the phosphoserine modification. Positions 272-303 are enriched in low complexity; it reads PQLLDPQPRFLDPQALEPLGEGLELPPLQPLA. The segment covering 391–401 has biased composition (basic residues); the sequence is ILCRRRKAGRG. Residues 395–407 constitute a DNA-binding region (a.T hook 1); sequence RRKAGRGRKADSG. The segment covering 427 to 447 has biased composition (pro residues); that stretch reads EPPPLPPPPPPTLSGPGPVPE. Positions 541–553 form a DNA-binding region, a.T hook 2; the sequence is KRKRGRPPKNLLL. The disordered stretch occupies residues 578-604; sequence MPEVKKRRRRKQKLASPQPSYAADAND. A Phosphoserine modification is found at Ser-593. Lys-606 is covalently cross-linked (Glycyl lysine isopeptide (Lys-Gly) (interchain with G-Cter in SUMO2)). Positions 714–789 are disordered; it reads LTELGHPRKR…PGGQAGRNCG (76 aa). Residues 734–743 are compositionally biased toward basic residues; sequence KPKRKRRSRK. 2 positions are modified to phosphoserine: Ser-825 and Ser-842. Arg-887 is subject to Omega-N-methylarginine. Ser-892 bears the Phosphoserine mark. The disordered stretch occupies residues 942 to 967; that stretch reads KLAPPPSAVARSPTTHPPANTYPPQY. At Ser-1060 the chain carries Phosphoserine. Disordered regions lie at residues 1152 to 1191 and 1245 to 1306; these read VSETFSESSSDSTQFSQPVGGGGFRRANSEASSSEGQSSL and STSA…PDLG. 3 stretches are compositionally biased toward low complexity: residues 1153 to 1168, 1180 to 1191, and 1245 to 1264; these read SETFSESSSDSTQFSQ, SEASSSEGQSSL, and STSATASGYPSKRSTGPRQP. The residue at position 1180 (Ser-1180) is a Phosphoserine. 3 positions are modified to phosphoserine: Ser-1315, Ser-1317, and Ser-1392. A Phosphothreonine modification is found at Thr-1394. Position 1396 is a phosphoserine (Ser-1396). Lys-1402 participates in a covalent cross-link: Glycyl lysine isopeptide (Lys-Gly) (interchain with G-Cter in SUMO2). Positions 1495 to 1525 are disordered; it reads HLASPPATPKADKEPLEMARPPGPPRGPAAA. A phosphoserine mark is found at Ser-1498 and Ser-1540.

The protein resides in the nucleus. Its subcellular location is the chromosome. Functionally, transcription factor required for the proper patterning of the epidermis, which plays a key role in early epithelial morphogenesis. Directly binds promoter and enhancer regions and acts by maintaining local enhancer-promoter chromatin architecture. Interacts with many sequence-specific zinc-finger transcription factors and methyl-CpG-binding proteins to regulate the expression of mesoderm genes that wire surface ectoderm stratification. This chain is Transcription factor Gibbin, found in Mus musculus (Mouse).